The chain runs to 191 residues: UPF0312 protein PSPA7_0523 (191 aa).

An N-terminal signal peptide occupies residues 1–23 (MLKKTLAALALGSALFTAGQAMA).

The protein belongs to the UPF0312 family. Type 1 subfamily.

The protein localises to the periplasm. The chain is UPF0312 protein PSPA7_0523 from Pseudomonas paraeruginosa (strain DSM 24068 / PA7) (Pseudomonas aeruginosa (strain PA7)).